The primary structure comprises 233 residues: Ion-translocating oxidoreductase complex subunit E (233 aa).

Helical transmembrane passes span 18-38 (ALVQ…ATNA), 39-59 (LGLG…VSAL), 69-89 (IPIY…LINA), 92-112 (FGLY…CIVI), 128-148 (ALDG…LGAL), and 182-202 (PFLL…LLAG).

The protein belongs to the NqrDE/RnfAE family. As to quaternary structure, the complex is composed of six subunits: RnfA, RnfB, RnfC, RnfD, RnfE and RnfG.

Its subcellular location is the cell inner membrane. In terms of biological role, part of a membrane-bound complex that couples electron transfer with translocation of ions across the membrane. This is Ion-translocating oxidoreductase complex subunit E from Yersinia pseudotuberculosis serotype O:3 (strain YPIII).